We begin with the raw amino-acid sequence, 368 residues long: MSTDSDTTPDTEEAREQLIDLAADFYDQFADGEVPTMTIPTRTKSNIVFDEDEQVWVYGDRNSTRSAKTISGAEKILKAVYTIDFLSQQLEEDRSSTLRELYYLSESWDLDEAQFNTQDESNNLIEDLEIVSDVKREDFHMRPEESGAKVMGPLLLREQTNRGDREIHCQDDVGQGGYQIPNNPDTIEFLDNDAKFVLCVETGGMRDRLVENGFDDEYDALVVHLGGQPARATRRLIKRLHDELDLPVTVFTDGDPWSYRIFGSVSYGSIKSAHLSEYLATPEAQFIGIRPEDIVEYELPTDPLSDSDVNALESELEDPRFQTDFWEEQIELQLDINKKAEQQALASRGLDFVTETYLPERLDEMGIL.

Residues 9 to 148 form the Topo IIA-type catalytic domain; that stretch reads PDTEEAREQL…FHMRPEESGA (140 aa). Tyr-103 serves as the catalytic O-(5'-phospho-DNA)-tyrosine intermediate. Residues Glu-201 and Asp-253 each contribute to the Mg(2+) site.

It belongs to the TOP6A family. In terms of assembly, homodimer. Heterotetramer of two Top6A and two Top6B chains. It depends on Mg(2+) as a cofactor.

The catalysed reaction is ATP-dependent breakage, passage and rejoining of double-stranded DNA.. Functionally, relaxes both positive and negative superturns and exhibits a strong decatenase activity. This Haloarcula marismortui (strain ATCC 43049 / DSM 3752 / JCM 8966 / VKM B-1809) (Halobacterium marismortui) protein is Type 2 DNA topoisomerase 6 subunit A.